The sequence spans 295 residues: Light-independent protochlorophyllide reductase iron-sulfur ATP-binding protein (295 aa).

Residues 39–44 (GIGKST) and Lys-68 each bind ATP. Mg(2+) is bound at residue Ser-43. Residues Cys-124 and Cys-158 each contribute to the [4Fe-4S] cluster site. Residue 209 to 210 (NR) participates in ATP binding.

Belongs to the NifH/BchL/ChlL family. Homodimer. Protochlorophyllide reductase is composed of three subunits; ChlL, ChlN and ChlB. Requires [4Fe-4S] cluster as cofactor.

It carries out the reaction chlorophyllide a + oxidized 2[4Fe-4S]-[ferredoxin] + 2 ADP + 2 phosphate = protochlorophyllide a + reduced 2[4Fe-4S]-[ferredoxin] + 2 ATP + 2 H2O. It functions in the pathway porphyrin-containing compound metabolism; chlorophyll biosynthesis (light-independent). Functionally, component of the dark-operative protochlorophyllide reductase (DPOR) that uses Mg-ATP and reduced ferredoxin to reduce ring D of protochlorophyllide (Pchlide) to form chlorophyllide a (Chlide). This reaction is light-independent. The L component serves as a unique electron donor to the NB-component of the complex, and binds Mg-ATP. This is Light-independent protochlorophyllide reductase iron-sulfur ATP-binding protein from Prochlorococcus marinus (strain AS9601).